A 301-amino-acid polypeptide reads, in one-letter code: Acetylglutamate kinase (301 aa).

Residues 71-72 (GG), Arg-93, and Asn-198 each bind substrate.

The protein belongs to the acetylglutamate kinase family. ArgB subfamily.

It localises to the cytoplasm. It catalyses the reaction N-acetyl-L-glutamate + ATP = N-acetyl-L-glutamyl 5-phosphate + ADP. It participates in amino-acid biosynthesis; L-arginine biosynthesis; N(2)-acetyl-L-ornithine from L-glutamate: step 2/4. In terms of biological role, catalyzes the ATP-dependent phosphorylation of N-acetyl-L-glutamate. The protein is Acetylglutamate kinase of Rhizorhabdus wittichii (strain DSM 6014 / CCUG 31198 / JCM 15750 / NBRC 105917 / EY 4224 / RW1) (Sphingomonas wittichii).